Here is a 547-residue protein sequence, read N- to C-terminus: Chaperonin GroEL (547 aa).

Residues 30-33 (TLGP), K51, 87-91 (DGTTT), G415, and D496 contribute to the ATP site.

The protein belongs to the chaperonin (HSP60) family. In terms of assembly, forms a cylinder of 14 subunits composed of two heptameric rings stacked back-to-back. Interacts with the co-chaperonin GroES.

Its subcellular location is the cytoplasm. The catalysed reaction is ATP + H2O + a folded polypeptide = ADP + phosphate + an unfolded polypeptide.. Its function is as follows. Together with its co-chaperonin GroES, plays an essential role in assisting protein folding. The GroEL-GroES system forms a nano-cage that allows encapsulation of the non-native substrate proteins and provides a physical environment optimized to promote and accelerate protein folding. The polypeptide is Chaperonin GroEL (Chlorobaculum parvum (strain DSM 263 / NCIMB 8327) (Chlorobium vibrioforme subsp. thiosulfatophilum)).